A 361-amino-acid chain; its full sequence is DNA replication and repair protein RecF (361 aa).

Position 30-37 (30-37 (GANGSGKT)) interacts with ATP.

It belongs to the RecF family.

The protein resides in the cytoplasm. Functionally, the RecF protein is involved in DNA metabolism; it is required for DNA replication and normal SOS inducibility. RecF binds preferentially to single-stranded, linear DNA. It also seems to bind ATP. This is DNA replication and repair protein RecF from Chromohalobacter salexigens (strain ATCC BAA-138 / DSM 3043 / CIP 106854 / NCIMB 13768 / 1H11).